Here is a 359-residue protein sequence, read N- to C-terminus: UDP-N-acetylglucosamine--N-acetylmuramyl-(pentapeptide) pyrophosphoryl-undecaprenol N-acetylglucosamine transferase (359 aa).

UDP-N-acetyl-alpha-D-glucosamine contacts are provided by residues 15-17 (TGG), Asn127, Arg166, Ser191, Ile245, 264-269 (ALTVSE), and Gln290.

The protein belongs to the glycosyltransferase 28 family. MurG subfamily.

The protein resides in the cell inner membrane. It catalyses the reaction di-trans,octa-cis-undecaprenyl diphospho-N-acetyl-alpha-D-muramoyl-L-alanyl-D-glutamyl-meso-2,6-diaminopimeloyl-D-alanyl-D-alanine + UDP-N-acetyl-alpha-D-glucosamine = di-trans,octa-cis-undecaprenyl diphospho-[N-acetyl-alpha-D-glucosaminyl-(1-&gt;4)]-N-acetyl-alpha-D-muramoyl-L-alanyl-D-glutamyl-meso-2,6-diaminopimeloyl-D-alanyl-D-alanine + UDP + H(+). It functions in the pathway cell wall biogenesis; peptidoglycan biosynthesis. Cell wall formation. Catalyzes the transfer of a GlcNAc subunit on undecaprenyl-pyrophosphoryl-MurNAc-pentapeptide (lipid intermediate I) to form undecaprenyl-pyrophosphoryl-MurNAc-(pentapeptide)GlcNAc (lipid intermediate II). The sequence is that of UDP-N-acetylglucosamine--N-acetylmuramyl-(pentapeptide) pyrophosphoryl-undecaprenol N-acetylglucosamine transferase from Pseudomonas putida (strain GB-1).